The chain runs to 586 residues: MKENETLKQIVLKTLEESVNSLISSFPEVEKEAFKIKIEYSRDEKFGDYSTSFALENSKLLKRNPIQVSKELVEILQKRTDLFEKVDFTPPGFVNFRISTSFLLNYIETSVLSGNYFPKVDLPLKINLEFVSANPTGPLNIVSARAAANGDTMASLLKAIGHNVDKEFYINDYGNQVFLLGVSTLVRIRELKGEEGTQQETTDDTPIEIILEKNILPAEGYRGEYIKDIASSLLKDPKKNVTIENLLKQKKYKELAELCAVWTIENNLIWQRKDLDAFGVEFDCYFSERTLHEADKVLSVMKDLEKSGKIFQEDGKKVFRSTEYGDDKDRVVVRDDGRPTYLLADIAYHKDKIERGYDKIYDIWGPDHHGYISRLSGAVQSLGYKKENFKVIISQQVNLLESGQKVKMSKRAGSFQTMSDLIGFLGKHGKDVGRYFFVMRSLDAPLDFDLDLAKDESDKNPVFYLQYAHARICSIFKEVGDQTSKEAAAILEMSEERKRLLFWIARFPEEIFDSANAMEPHRVTNYLQSFAKAFTSFYLAKDNRLKDASKEVRLGLARICLAAKNVLAEGLKLIGVSAPERMEKEN.

Residues 133-143 (ANPTGPLNIVS) carry the 'HIGH' region motif.

The protein belongs to the class-I aminoacyl-tRNA synthetase family. As to quaternary structure, monomer.

It is found in the cytoplasm. It carries out the reaction tRNA(Arg) + L-arginine + ATP = L-arginyl-tRNA(Arg) + AMP + diphosphate. The chain is Arginine--tRNA ligase from Leptospira interrogans serogroup Icterohaemorrhagiae serovar copenhageni (strain Fiocruz L1-130).